The sequence spans 189 residues: Phosphoheptose isomerase (189 aa).

The SIS domain maps to 33-189 (CTDTLKAGNK…ELVEREIYGG (157 aa)). 48 to 50 (NGG) serves as a coordination point for substrate. The Zn(2+) site is built by His-57 and Glu-61. Residues Glu-61, 90 to 91 (ND), 116 to 118 (STS), Ser-121, and Gln-168 contribute to the substrate site. Zn(2+)-binding residues include Gln-168 and His-176.

The protein belongs to the SIS family. GmhA subfamily. Zn(2+) is required as a cofactor.

It is found in the cytoplasm. The enzyme catalyses 2 D-sedoheptulose 7-phosphate = D-glycero-alpha-D-manno-heptose 7-phosphate + D-glycero-beta-D-manno-heptose 7-phosphate. The protein operates within carbohydrate biosynthesis; D-glycero-D-manno-heptose 7-phosphate biosynthesis; D-glycero-alpha-D-manno-heptose 7-phosphate and D-glycero-beta-D-manno-heptose 7-phosphate from sedoheptulose 7-phosphate: step 1/1. Catalyzes the isomerization of sedoheptulose 7-phosphate in D-glycero-D-manno-heptose 7-phosphate. In Akkermansia muciniphila (strain ATCC BAA-835 / DSM 22959 / JCM 33894 / BCRC 81048 / CCUG 64013 / CIP 107961 / Muc), this protein is Phosphoheptose isomerase.